We begin with the raw amino-acid sequence, 89 residues long: Small ribosomal subunit protein uS15 (89 aa).

The protein belongs to the universal ribosomal protein uS15 family. Part of the 30S ribosomal subunit. Forms a bridge to the 50S subunit in the 70S ribosome, contacting the 23S rRNA.

Its function is as follows. One of the primary rRNA binding proteins, it binds directly to 16S rRNA where it helps nucleate assembly of the platform of the 30S subunit by binding and bridging several RNA helices of the 16S rRNA. Functionally, forms an intersubunit bridge (bridge B4) with the 23S rRNA of the 50S subunit in the ribosome. This Shewanella halifaxensis (strain HAW-EB4) protein is Small ribosomal subunit protein uS15.